The following is a 616-amino-acid chain: Dihydroxy-acid dehydratase (616 aa).

Aspartate 81 contacts Mg(2+). Residue cysteine 122 coordinates [2Fe-2S] cluster. Mg(2+) is bound by residues aspartate 123 and lysine 124. Lysine 124 is modified (N6-carboxylysine). Cysteine 195 provides a ligand contact to [2Fe-2S] cluster. A Mg(2+)-binding site is contributed by glutamate 491. Serine 517 (proton acceptor) is an active-site residue.

The protein belongs to the IlvD/Edd family. In terms of assembly, homodimer. It depends on [2Fe-2S] cluster as a cofactor. Requires Mg(2+) as cofactor.

It catalyses the reaction (2R)-2,3-dihydroxy-3-methylbutanoate = 3-methyl-2-oxobutanoate + H2O. It carries out the reaction (2R,3R)-2,3-dihydroxy-3-methylpentanoate = (S)-3-methyl-2-oxopentanoate + H2O. The protein operates within amino-acid biosynthesis; L-isoleucine biosynthesis; L-isoleucine from 2-oxobutanoate: step 3/4. It participates in amino-acid biosynthesis; L-valine biosynthesis; L-valine from pyruvate: step 3/4. Functionally, functions in the biosynthesis of branched-chain amino acids. Catalyzes the dehydration of (2R,3R)-2,3-dihydroxy-3-methylpentanoate (2,3-dihydroxy-3-methylvalerate) into 2-oxo-3-methylpentanoate (2-oxo-3-methylvalerate) and of (2R)-2,3-dihydroxy-3-methylbutanoate (2,3-dihydroxyisovalerate) into 2-oxo-3-methylbutanoate (2-oxoisovalerate), the penultimate precursor to L-isoleucine and L-valine, respectively. The sequence is that of Dihydroxy-acid dehydratase from Salmonella gallinarum (strain 287/91 / NCTC 13346).